The chain runs to 490 residues: uncharacterized protein (490 aa).

Residues 1 to 19 form the signal peptide; it reads MSITSVSLYVYLICAGGHA.

This sequence belongs to the mimivirus L137 family.

This is an uncharacterized protein from Acanthamoeba polyphaga (Amoeba).